Reading from the N-terminus, the 494-residue chain is Subtilisin-like serine protease EN45_078720 (494 aa).

Residues 1–16 form the signal peptide; the sequence is MKGFLSLTLLPLLVAA. Residues 17-136 constitute a propeptide, removed in mature form; the sequence is SPVAVNSIHN…IEKDSEVRTM (120 aa). The region spanning 43–136 is the Inhibitor I9 domain; that stretch reads SYIVVFKKHV…IEKDSEVRTM (94 aa). Positions 146–448 constitute a Peptidase S8 domain; it reads PWGLARISHR…GGSANYTKIL (303 aa). IgE-binding stretches follow at residues 180 to 198 and 209 to 231; these read VIDTGANVKHVDFEGRANW and EDGNGHGTHCSGTIAGKKFGVAK. Residues Asp-182 and His-214 each act as charge relay system in the active site. Asn-244 and Asn-280 each carry an N-linked (GlcNAc...) asparagine glycan. The active-site Charge relay system is Ser-376. Asn-443 is a glycosylation site (N-linked (GlcNAc...) asparagine). Positions 454-494 are cleaved as a propeptide — removed in mature form; the sequence is KAHNAETTVEDRIGGIIDSAEKAFHKELGAIYSEIKDAVSA.

Belongs to the peptidase S8 family.

Serine protease. This chain is Subtilisin-like serine protease EN45_078720, found in Penicillium chrysogenum (Penicillium notatum).